Here is a 490-residue protein sequence, read N- to C-terminus: MDGIQTSDSSHHGIVENSPYRTPYDRYAEGGQLGASWYFSRKEIEENSLSRRDGIDLKKESYLRKSYCTFLQDLGMRLKVPQVTIATAIVFCHRFFLRQSHAKNDRRTIATVCMFLAGKVEETPRPLKDVILISYEIIHKKDAAAVQRIKQKEVYEQQKELILLGERVVLVTLGFDLNVHHPYKPLVEAIKKFKVAQNALAQVAWNFVNDGLRTSLCLQFKPHHIAAGAIFLAAKFLKVKLPSDGEKVWWQEFDVTPRQLEEVSNQMLELYEQNRVAPPPSQGNDTEGSSASVVNQRASGKAPGSSEEPPTHENHLAPRQSSTPGHQGYDHPHPEKQNSSQRVPQNDARDGTANSNEGPNMSSTMDAMKKIDKDKVKAALEKRRKSKGDVAKKVDIMDDDDLIERELEHGVELAAEDEKIKHERRQSWPHSAHREDHQGVARLTENTEEGELSIDSQEYRSPELDNRKRKDMHEHRNYDRGERDLKRLRS.

2 disordered regions span residues 275 to 391 and 414 to 490; these read RVAP…GDVA and AAED…RLRS. Composition is skewed to polar residues over residues 282–298 and 352–365; these read QGNDTEGSSASVVNQRA and TANSNEGPNMSSTM. 2 stretches are compositionally biased toward basic and acidic residues: residues 367–391 and 457–490; these read AMKKIDKDKVKAALEKRRKSKGDVA and QEYRSPELDNRKRKDMHEHRNYDRGERDLKRLRS.

Belongs to the cyclin family. Cyclin T subfamily.

This Oryza sativa subsp. japonica (Rice) protein is Cyclin-T1-3 (CYCT1-3).